The chain runs to 593 residues: Methionine--tRNA ligase, mitochondrial (593 aa).

Residues 1-29 (MLRVSAFRLLGRRGASRVSLLEDFSFRYY) constitute a mitochondrion transit peptide. The 'HIGH' region signature appears at 52–62 (FYVNAAPHIGH). Positions 347–351 (KMSKS) match the 'KMSKS' region motif. Lys-350 is a binding site for ATP.

Belongs to the class-I aminoacyl-tRNA synthetase family.

It localises to the mitochondrion matrix. The enzyme catalyses tRNA(Met) + L-methionine + ATP = L-methionyl-tRNA(Met) + AMP + diphosphate. This is Methionine--tRNA ligase, mitochondrial (MARS2) from Bos taurus (Bovine).